Reading from the N-terminus, the 351-residue chain is Dihydroorotate dehydrogenase (quinone) (351 aa).

FMN is bound by residues 61–65 (AGLDK) and threonine 85. Residue lysine 65 participates in substrate binding. 110 to 114 (NRMGF) lines the substrate pocket. Residues asparagine 139 and asparagine 172 each contribute to the FMN site. Substrate is bound at residue asparagine 172. The active-site Nucleophile is serine 175. Residue asparagine 177 coordinates substrate. FMN is bound by residues lysine 217 and threonine 245. 246–247 (NT) is a binding site for substrate. FMN-binding positions include glycine 268, glycine 297, and 318–319 (YT).

This sequence belongs to the dihydroorotate dehydrogenase family. Type 2 subfamily. As to quaternary structure, monomer. Requires FMN as cofactor.

Its subcellular location is the cell membrane. The enzyme catalyses (S)-dihydroorotate + a quinone = orotate + a quinol. The protein operates within pyrimidine metabolism; UMP biosynthesis via de novo pathway; orotate from (S)-dihydroorotate (quinone route): step 1/1. In terms of biological role, catalyzes the conversion of dihydroorotate to orotate with quinone as electron acceptor. This Xylella fastidiosa (strain M12) protein is Dihydroorotate dehydrogenase (quinone).